The chain runs to 81 residues: Small ribosomal subunit protein bS16 (81 aa).

The protein belongs to the bacterial ribosomal protein bS16 family.

In Clostridium beijerinckii (strain ATCC 51743 / NCIMB 8052) (Clostridium acetobutylicum), this protein is Small ribosomal subunit protein bS16.